The sequence spans 387 residues: Aminodeoxyfutalosine synthase (387 aa).

Positions 52–279 (VHFNVNRHLN…ARTQMATGAE (228 aa)) constitute a Radical SAM core domain. C66, C70, and C73 together coordinate [4Fe-4S] cluster.

It belongs to the radical SAM superfamily. MqnE family. [4Fe-4S] cluster is required as a cofactor.

It catalyses the reaction 3-[(1-carboxyvinyl)-oxy]benzoate + S-adenosyl-L-methionine + H2O = 6-amino-6-deoxyfutalosine + hydrogencarbonate + L-methionine + H(+). The protein operates within quinol/quinone metabolism; menaquinone biosynthesis. In terms of biological role, radical SAM enzyme that catalyzes the addition of the adenosyl radical to the double bond of 3-[(1-carboxyvinyl)oxy]benzoate, leading to aminodeoxyfutalosine (AFL), a key intermediate in the formation of menaquinone (MK, vitamin K2) from chorismate. The sequence is that of Aminodeoxyfutalosine synthase from Streptomyces coelicolor (strain ATCC BAA-471 / A3(2) / M145).